Here is a 356-residue protein sequence, read N- to C-terminus: Tyrosine recombinase XerS (356 aa).

One can recognise a Core-binding (CB) domain in the interval 16-121; sequence IMPWYVLEYY…ALSSLFKYLT (106 aa). One can recognise a Tyr recombinase domain in the interval 169-354; it reads EFLEYIDCEY…VNDEQKNALD (186 aa). Residues R210, K234, H306, R309, and H332 contribute to the active site. Y341 functions as the O-(3'-phospho-DNA)-tyrosine intermediate in the catalytic mechanism.

Belongs to the 'phage' integrase family. XerS subfamily.

It is found in the cytoplasm. With respect to regulation, ftsK is required for recombination. Functionally, site-specific tyrosine recombinase, which acts by catalyzing the cutting and rejoining of the recombining DNA molecules. Essential to convert dimers of the bacterial chromosome into monomers to permit their segregation at cell division. This chain is Tyrosine recombinase XerS, found in Streptococcus agalactiae serotype Ia (strain ATCC 27591 / A909 / CDC SS700).